We begin with the raw amino-acid sequence, 101 residues long: NAD(P)H-quinone oxidoreductase subunit 4L, chloroplastic (101 aa).

3 consecutive transmembrane segments (helical) span residues Met-2–Ile-22, Met-32–Phe-52, and Ile-61–Val-81.

It belongs to the complex I subunit 4L family. As to quaternary structure, NDH is composed of at least 16 different subunits, 5 of which are encoded in the nucleus.

Its subcellular location is the plastid. The protein resides in the chloroplast thylakoid membrane. The catalysed reaction is a plastoquinone + NADH + (n+1) H(+)(in) = a plastoquinol + NAD(+) + n H(+)(out). It catalyses the reaction a plastoquinone + NADPH + (n+1) H(+)(in) = a plastoquinol + NADP(+) + n H(+)(out). Functionally, NDH shuttles electrons from NAD(P)H:plastoquinone, via FMN and iron-sulfur (Fe-S) centers, to quinones in the photosynthetic chain and possibly in a chloroplast respiratory chain. The immediate electron acceptor for the enzyme in this species is believed to be plastoquinone. Couples the redox reaction to proton translocation, and thus conserves the redox energy in a proton gradient. The polypeptide is NAD(P)H-quinone oxidoreductase subunit 4L, chloroplastic (Gossypium hirsutum (Upland cotton)).